Here is a 569-residue protein sequence, read N- to C-terminus: Glutamate--tRNA ligase (569 aa).

The 'HIGH' region signature appears at 99–109 (PEPNGYPTLGH).

The protein belongs to the class-I aminoacyl-tRNA synthetase family. Glutamate--tRNA ligase type 2 subfamily.

The protein localises to the cytoplasm. The enzyme catalyses tRNA(Glu) + L-glutamate + ATP = L-glutamyl-tRNA(Glu) + AMP + diphosphate. Functionally, catalyzes the attachment of glutamate to tRNA(Glu) in a two-step reaction: glutamate is first activated by ATP to form Glu-AMP and then transferred to the acceptor end of tRNA(Glu). The protein is Glutamate--tRNA ligase of Korarchaeum cryptofilum (strain OPF8).